The following is a 371-amino-acid chain: Glycerol-3-phosphate dehydrogenase [NAD(+)] 2 (371 aa).

NAD(+)-binding positions include 18–23, Phe-50, and Phe-106; that span reads GSGNWG. Position 129 (Lys-129) interacts with substrate. Ala-162 is an NAD(+) binding site. The Proton acceptor role is filled by Lys-222. Arg-294 and Gln-323 together coordinate NAD(+). Substrate is bound at residue 294-295; the sequence is RN.

It belongs to the NAD-dependent glycerol-3-phosphate dehydrogenase family. As to quaternary structure, interacts with human CFH/complement factor H; the interaction is direct and enables the pathogen to evade the host innate immune system. Interacts with human CFHR1/complement factor H-related protein 1; the interaction is direct. Interacts with human PLG/plasminogen; the interaction is direct and provides active plasmin on the surface of fungal cells.

It localises to the secreted. Its subcellular location is the cell wall. The protein localises to the cytoplasm. It is found in the peroxisome. The enzyme catalyses sn-glycerol 3-phosphate + NAD(+) = dihydroxyacetone phosphate + NADH + H(+). In terms of biological role, may catalyze the production and accumulation of glycerol during hyperosmotic stress conditions. Glycerol acts as a osmoregulator that prevents loss of water and turgor of the cells. Mediates evasion of the host innate immune system by binding inhibitory components of the host alternative complement system, in a manner dependent on estrogen-induced inhibition of EBP1. The chain is Glycerol-3-phosphate dehydrogenase [NAD(+)] 2 from Candida albicans (strain SC5314 / ATCC MYA-2876) (Yeast).